The primary structure comprises 460 residues: NADH-ubiquinone oxidoreductase chain 4 (460 aa).

Transmembrane regions (helical) follow at residues 22–42, 59–79, 93–113, 114–134, 148–168, 195–215, 225–245, 258–278, 286–306, 310–330, 351–371, 394–414, and 440–460; these read WLWP…LLWF, IDPL…LMIL, QRIY…AFSA, TELI…LIII, TYFL…LLLM, FWWT…GVHL, PIAG…YGMM, MAYP…SICL, LIAY…MIQT, FAGA…LFCL, VMLP…LALP, ILLT…MFLM, and LHLI…GWTF.

This sequence belongs to the complex I subunit 4 family.

The protein resides in the mitochondrion membrane. It catalyses the reaction a ubiquinone + NADH + 5 H(+)(in) = a ubiquinol + NAD(+) + 4 H(+)(out). Functionally, core subunit of the mitochondrial membrane respiratory chain NADH dehydrogenase (Complex I) that is believed to belong to the minimal assembly required for catalysis. Complex I functions in the transfer of electrons from NADH to the respiratory chain. The immediate electron acceptor for the enzyme is believed to be ubiquinone. This chain is NADH-ubiquinone oxidoreductase chain 4 (MT-ND4), found in Squalus acanthias (Spiny dogfish).